The sequence spans 510 residues: NAD(P)H-quinone oxidoreductase subunit 2, chloroplastic (510 aa).

Transmembrane regions (helical) follow at residues L24 to L44, W59 to W79, I99 to I119, M124 to C144, L149 to Y169, Y183 to G203, W295 to I315, M323 to D343, G347 to A367, A395 to F415, and L418 to L438.

Belongs to the complex I subunit 2 family. NDH is composed of at least 16 different subunits, 5 of which are encoded in the nucleus.

It localises to the plastid. The protein localises to the chloroplast thylakoid membrane. It catalyses the reaction a plastoquinone + NADH + (n+1) H(+)(in) = a plastoquinol + NAD(+) + n H(+)(out). It carries out the reaction a plastoquinone + NADPH + (n+1) H(+)(in) = a plastoquinol + NADP(+) + n H(+)(out). NDH shuttles electrons from NAD(P)H:plastoquinone, via FMN and iron-sulfur (Fe-S) centers, to quinones in the photosynthetic chain and possibly in a chloroplast respiratory chain. The immediate electron acceptor for the enzyme in this species is believed to be plastoquinone. Couples the redox reaction to proton translocation, and thus conserves the redox energy in a proton gradient. In Maianthemum racemosum (False Solomon's-seal), this protein is NAD(P)H-quinone oxidoreductase subunit 2, chloroplastic.